The sequence spans 93 residues: Phosphoribosyl-ATP pyrophosphatase (93 aa).

The protein belongs to the PRA-PH family.

The protein localises to the cytoplasm. It carries out the reaction 1-(5-phospho-beta-D-ribosyl)-ATP + H2O = 1-(5-phospho-beta-D-ribosyl)-5'-AMP + diphosphate + H(+). Its pathway is amino-acid biosynthesis; L-histidine biosynthesis; L-histidine from 5-phospho-alpha-D-ribose 1-diphosphate: step 2/9. The chain is Phosphoribosyl-ATP pyrophosphatase (hisE) from Mycobacterium bovis (strain ATCC BAA-935 / AF2122/97).